A 330-amino-acid polypeptide reads, in one-letter code: Ketol-acid reductoisomerase (NADP(+)) (330 aa).

Positions 1 to 181 (MNVYYEQDAD…GGTKAGVIET (181 aa)) constitute a KARI N-terminal Rossmann domain. Residues 24 to 27 (YGSQ), arginine 47, serine 50, serine 52, and 82 to 85 (DQNQ) each bind NADP(+). The active site involves histidine 107. Glycine 133 contributes to the NADP(+) binding site. The 146-residue stretch at 182–327 (SIKNETETDL…AKLRDMMSWL (146 aa)) folds into the KARI C-terminal knotted domain. Mg(2+) is bound by residues aspartate 190, glutamate 194, glutamate 226, and glutamate 230. Residue serine 251 coordinates substrate.

It belongs to the ketol-acid reductoisomerase family. The cofactor is Mg(2+).

It carries out the reaction (2R)-2,3-dihydroxy-3-methylbutanoate + NADP(+) = (2S)-2-acetolactate + NADPH + H(+). The catalysed reaction is (2R,3R)-2,3-dihydroxy-3-methylpentanoate + NADP(+) = (S)-2-ethyl-2-hydroxy-3-oxobutanoate + NADPH + H(+). Its pathway is amino-acid biosynthesis; L-isoleucine biosynthesis; L-isoleucine from 2-oxobutanoate: step 2/4. It functions in the pathway amino-acid biosynthesis; L-valine biosynthesis; L-valine from pyruvate: step 2/4. Involved in the biosynthesis of branched-chain amino acids (BCAA). Catalyzes an alkyl-migration followed by a ketol-acid reduction of (S)-2-acetolactate (S2AL) to yield (R)-2,3-dihydroxy-isovalerate. In the isomerase reaction, S2AL is rearranged via a Mg-dependent methyl migration to produce 3-hydroxy-3-methyl-2-ketobutyrate (HMKB). In the reductase reaction, this 2-ketoacid undergoes a metal-dependent reduction by NADPH to yield (R)-2,3-dihydroxy-isovalerate. This chain is Ketol-acid reductoisomerase (NADP(+)), found in Pelodictyon phaeoclathratiforme (strain DSM 5477 / BU-1).